Reading from the N-terminus, the 205-residue chain is Proteasome subunit beta type-3 (205 aa).

Belongs to the peptidase T1B family. In terms of assembly, the 26S proteasome consists of a 20S proteasome core and two 19S regulatory subunits. The 20S proteasome core is composed of 28 subunits that are arranged in four stacked rings, resulting in a barrel-shaped structure. The two end rings are each formed by seven alpha subunits, and the two central rings are each formed by seven beta subunits. The catalytic chamber with the active sites is on the inside of the barrel.

Its subcellular location is the cytoplasm. It localises to the nucleus. Functionally, non-catalytic component of the proteasome, a multicatalytic proteinase complex which is characterized by its ability to cleave peptides with Arg, Phe, Tyr, Leu, and Glu adjacent to the leaving group at neutral or slightly basic pH. The proteasome has an ATP-dependent proteolytic activity. The polypeptide is Proteasome subunit beta type-3 (psmb3) (Oncorhynchus mykiss (Rainbow trout)).